The sequence spans 163 residues: Intron-encoded endonuclease I-PpoI (163 aa).

As to quaternary structure, homodimer. Zn(2+) serves as cofactor.

Mediates the homing of a group I intron in the ribosomal DNA. Makes a four-base staggered cut in its ribosomal DNA target sequence. This chain is Intron-encoded endonuclease I-PpoI, found in Physarum polycephalum (Slime mold).